Consider the following 216-residue polypeptide: Ribose-5-phosphate isomerase A (216 aa).

Substrate-binding positions include 26–29, 79–82, and 92–95; these read TGST, DGAD, and KGGG. Catalysis depends on glutamate 101, which acts as the Proton acceptor. Lysine 119 is a binding site for substrate.

It belongs to the ribose 5-phosphate isomerase family. Homodimer.

It carries out the reaction aldehydo-D-ribose 5-phosphate = D-ribulose 5-phosphate. It functions in the pathway carbohydrate degradation; pentose phosphate pathway; D-ribose 5-phosphate from D-ribulose 5-phosphate (non-oxidative stage): step 1/1. Its function is as follows. Catalyzes the reversible conversion of ribose-5-phosphate to ribulose 5-phosphate. The protein is Ribose-5-phosphate isomerase A of Legionella pneumophila (strain Paris).